The primary structure comprises 132 residues: MGRDTIANIITSIRNADMDKKGTVRIASTNITENIVKILLREGFIENVRKHQENQRFFLVSTLRHRRTSKGVYRTILKRISRPGLRIYSNYQRIPKILGGIGIVILSTSQGIMTDREARLKKIGGEILCYIW.

This sequence belongs to the universal ribosomal protein uS8 family. In terms of assembly, part of the 30S ribosomal subunit.

It localises to the plastid. The protein resides in the chloroplast. Functionally, one of the primary rRNA binding proteins, it binds directly to 16S rRNA central domain where it helps coordinate assembly of the platform of the 30S subunit. This is Small ribosomal subunit protein uS8c (rps8) from Dioscorea elephantipes (Elephant's foot yam).